Consider the following 355-residue polypeptide: Peptide chain release factor 1 (355 aa).

Residue Gln-232 is modified to N5-methylglutamine. The interval 282–309 (EQNASISAERKSQVGSGDRSERIRTYNY) is disordered. Positions 289–305 (AERKSQVGSGDRSERIR) are enriched in basic and acidic residues.

Belongs to the prokaryotic/mitochondrial release factor family. In terms of processing, methylated by PrmC. Methylation increases the termination efficiency of RF1.

Its subcellular location is the cytoplasm. Its function is as follows. Peptide chain release factor 1 directs the termination of translation in response to the peptide chain termination codons UAG and UAA. The protein is Peptide chain release factor 1 of Desulfatibacillum aliphaticivorans.